The sequence spans 321 residues: Lipoyl synthase (321 aa).

The [4Fe-4S] cluster site is built by cysteine 68, cysteine 73, cysteine 79, cysteine 94, cysteine 98, cysteine 101, and serine 308. Residues 80-297 form the Radical SAM core domain; that stretch reads FNHGTATFMI…KQEALAMGFT (218 aa).

This sequence belongs to the radical SAM superfamily. Lipoyl synthase family. Requires [4Fe-4S] cluster as cofactor.

It localises to the cytoplasm. The enzyme catalyses [[Fe-S] cluster scaffold protein carrying a second [4Fe-4S](2+) cluster] + N(6)-octanoyl-L-lysyl-[protein] + 2 oxidized [2Fe-2S]-[ferredoxin] + 2 S-adenosyl-L-methionine + 4 H(+) = [[Fe-S] cluster scaffold protein] + N(6)-[(R)-dihydrolipoyl]-L-lysyl-[protein] + 4 Fe(3+) + 2 hydrogen sulfide + 2 5'-deoxyadenosine + 2 L-methionine + 2 reduced [2Fe-2S]-[ferredoxin]. Its pathway is protein modification; protein lipoylation via endogenous pathway; protein N(6)-(lipoyl)lysine from octanoyl-[acyl-carrier-protein]: step 2/2. Catalyzes the radical-mediated insertion of two sulfur atoms into the C-6 and C-8 positions of the octanoyl moiety bound to the lipoyl domains of lipoate-dependent enzymes, thereby converting the octanoylated domains into lipoylated derivatives. The sequence is that of Lipoyl synthase from Sodalis glossinidius (strain morsitans).